Reading from the N-terminus, the 280-residue chain is uncharacterized protein (280 aa).

3 to 29 lines the NADP(+) pocket; the sequence is KKIAIVTGASSGFGLLAAVKLARSFFV. S139 contacts substrate. Y152 (proton acceptor) is an active-site residue.

This sequence belongs to the short-chain dehydrogenases/reductases (SDR) family.

This is an uncharacterized protein from Bacillus subtilis (strain 168).